The following is a 418-amino-acid chain: UDP-N-acetylglucosamine 1-carboxyvinyltransferase (418 aa).

22-23 (KN) contributes to the phosphoenolpyruvate binding site. R91 contacts UDP-N-acetyl-alpha-D-glucosamine. C115 serves as the catalytic Proton donor. Position 115 is a 2-(S-cysteinyl)pyruvic acid O-phosphothioketal (C115). Residues 120-124 (RPVDL), 160-163 (KVSV), D305, and I327 each bind UDP-N-acetyl-alpha-D-glucosamine.

Belongs to the EPSP synthase family. MurA subfamily.

The protein resides in the cytoplasm. It catalyses the reaction phosphoenolpyruvate + UDP-N-acetyl-alpha-D-glucosamine = UDP-N-acetyl-3-O-(1-carboxyvinyl)-alpha-D-glucosamine + phosphate. The protein operates within cell wall biogenesis; peptidoglycan biosynthesis. Its function is as follows. Cell wall formation. Adds enolpyruvyl to UDP-N-acetylglucosamine. This chain is UDP-N-acetylglucosamine 1-carboxyvinyltransferase, found in Baumannia cicadellinicola subsp. Homalodisca coagulata.